A 400-amino-acid chain; its full sequence is tRNA-specific adenosine deaminase TAD3 (400 aa).

One can recognise a CMP/dCMP-type deaminase domain in the interval 250–385; that stretch reads SQWHPLRHAS…KSLNHHYAVF (136 aa). A Zn(2+)-binding site is contributed by His257. Positions 273-320 are disordered; that stretch reads LFPNPSKIFDQDHVPPSNTDSPAKKQKTSSQSPDVQNDSREETVRDPS. The segment covering 309-320 has biased composition (basic and acidic residues); sequence NDSREETVRDPS. Zn(2+) is bound by residues Cys339 and Cys342.

This sequence belongs to the cytidine and deoxycytidylate deaminase family. ADAT3 subfamily. Interacts with TAD2.

The protein localises to the nucleus. It is found in the cytoplasm. It carries out the reaction adenosine(34) in tRNA + H2O + H(+) = inosine(34) in tRNA + NH4(+). Functionally, involved in RNA editing. Catalyzes the specific deamination of adenosine-34 in several cytosolic tRNA species. Generates inosine at the wobble position of the anticodon loop. The sequence is that of tRNA-specific adenosine deaminase TAD3 from Arabidopsis thaliana (Mouse-ear cress).